The primary structure comprises 283 residues: Formamidopyrimidine-DNA glycosylase (283 aa).

Catalysis depends on P2, which acts as the Schiff-base intermediate with DNA. Catalysis depends on E3, which acts as the Proton donor. Catalysis depends on K58, which acts as the Proton donor; for beta-elimination activity. Residues H100, R119, and R162 each contribute to the DNA site. The segment at 247–283 adopts an FPG-type zinc-finger fold; the sequence is RVYGREGLPCVTPGCSGTVGRIVQSGRSSFHCPLCQR. Catalysis depends on R273, which acts as the Proton donor; for delta-elimination activity.

The protein belongs to the FPG family. As to quaternary structure, monomer. Requires Zn(2+) as cofactor.

The enzyme catalyses Hydrolysis of DNA containing ring-opened 7-methylguanine residues, releasing 2,6-diamino-4-hydroxy-5-(N-methyl)formamidopyrimidine.. The catalysed reaction is 2'-deoxyribonucleotide-(2'-deoxyribose 5'-phosphate)-2'-deoxyribonucleotide-DNA = a 3'-end 2'-deoxyribonucleotide-(2,3-dehydro-2,3-deoxyribose 5'-phosphate)-DNA + a 5'-end 5'-phospho-2'-deoxyribonucleoside-DNA + H(+). Involved in base excision repair of DNA damaged by oxidation or by mutagenic agents. Acts as a DNA glycosylase that recognizes and removes damaged bases. Has a preference for oxidized purines, such as 7,8-dihydro-8-oxoguanine (8-oxoG). Has AP (apurinic/apyrimidinic) lyase activity and introduces nicks in the DNA strand. Cleaves the DNA backbone by beta-delta elimination to generate a single-strand break at the site of the removed base with both 3'- and 5'-phosphates. The polypeptide is Formamidopyrimidine-DNA glycosylase (Cereibacter sphaeroides (strain KD131 / KCTC 12085) (Rhodobacter sphaeroides)).